The sequence spans 323 residues: NADH-ubiquinone oxidoreductase chain 1 (323 aa).

8 consecutive transmembrane segments (helical) span residues 8–28 (VINP…LTLL), 74–94 (FLFL…WAPM), 105–125 (LGVL…LGSG), 145–165 (ISYE…TGGF), 176–196 (SIWL…STLA), 236–256 (ILLM…IPAF), 258–278 (ELTA…FLWV), and 298–318 (FLPL…ALAG).

The protein belongs to the complex I subunit 1 family.

Its subcellular location is the mitochondrion inner membrane. It carries out the reaction a ubiquinone + NADH + 5 H(+)(in) = a ubiquinol + NAD(+) + 4 H(+)(out). In terms of biological role, core subunit of the mitochondrial membrane respiratory chain NADH dehydrogenase (Complex I) that is believed to belong to the minimal assembly required for catalysis. Complex I functions in the transfer of electrons from NADH to the respiratory chain. The immediate electron acceptor for the enzyme is believed to be ubiquinone. The polypeptide is NADH-ubiquinone oxidoreductase chain 1 (MT-ND1) (Oncorhynchus mykiss (Rainbow trout)).